Here is an 86-residue protein sequence, read N- to C-terminus: Small ribosomal subunit protein bS20 (86 aa).

The span at 1 to 27 shows a compositional bias: basic residues; the sequence is MANSKSAKKRAIQAEKRRQHNASRRSM. A disordered region spans residues 1–28; it reads MANSKSAKKRAIQAEKRRQHNASRRSMM.

It belongs to the bacterial ribosomal protein bS20 family.

In terms of biological role, binds directly to 16S ribosomal RNA. This chain is Small ribosomal subunit protein bS20, found in Vibrio parahaemolyticus serotype O3:K6 (strain RIMD 2210633).